Here is a 42-residue protein sequence, read N- to C-terminus: Crotamine-IV-3 (42 aa).

Intrachain disulfides connect C4/C37, C11/C31, and C19/C38.

It belongs to the crotamine-myotoxin family. In terms of assembly, monomer. Expressed by the venom gland.

The protein resides in the secreted. Its function is as follows. Cationic peptide that possesses multiple functions. It acts as a cell-penetrating peptide (CPP), and as a potent voltage-gated potassium channel (Kv) inhibitor. It exhibits antimicrobial activities, and hind limb paralysis. It also induces potent blockade of neuromuscular transmission in young chicken biventer cervicis preparation and potent myotoxic effect. In mice, it induces myonecrosis, upon intramuscular or subcutaneous injections. This is Crotamine-IV-3 from Crotalus durissus cumanensis (South American rattlesnake).